We begin with the raw amino-acid sequence, 268 residues long: Phosphatidylglycerol--prolipoprotein diacylglyceryl transferase (268 aa).

7 consecutive transmembrane segments (helical) span residues 27 to 47, 66 to 86, 104 to 124, 130 to 150, 181 to 201, 208 to 228, and 242 to 262; these read PALR…MWLL, LLFY…VLFY, GGMS…YITW, FFAV…AGRI, PSQL…LYWF, VGAV…IVET, and LMTM…YLIL. Arg149 serves as a coordination point for a 1,2-diacyl-sn-glycero-3-phospho-(1'-sn-glycerol).

The protein belongs to the Lgt family.

The protein localises to the cell inner membrane. It carries out the reaction L-cysteinyl-[prolipoprotein] + a 1,2-diacyl-sn-glycero-3-phospho-(1'-sn-glycerol) = an S-1,2-diacyl-sn-glyceryl-L-cysteinyl-[prolipoprotein] + sn-glycerol 1-phosphate + H(+). It functions in the pathway protein modification; lipoprotein biosynthesis (diacylglyceryl transfer). Its function is as follows. Catalyzes the transfer of the diacylglyceryl group from phosphatidylglycerol to the sulfhydryl group of the N-terminal cysteine of a prolipoprotein, the first step in the formation of mature lipoproteins. In Shewanella oneidensis (strain ATCC 700550 / JCM 31522 / CIP 106686 / LMG 19005 / NCIMB 14063 / MR-1), this protein is Phosphatidylglycerol--prolipoprotein diacylglyceryl transferase.